Here is a 70-residue protein sequence, read N- to C-terminus: V-type proton ATPase subunit e1 (70 aa).

2 consecutive transmembrane segments (helical) span residues 1–21 and 36–56; these read MGFL…SLCV and LTLV…VYIA.

Belongs to the V-ATPase e1/e2 subunit family. In terms of assembly, V-ATPase is a heteromultimeric enzyme composed of a peripheral catalytic V1 complex (components A to H) attached to an integral membrane V0 proton pore complex (components: a, c, c'', d and e).

It localises to the golgi apparatus. Its subcellular location is the trans-Golgi network membrane. Its function is as follows. Subunit of the integral membrane V0 complex of vacuolar ATPase. V-ATPase is responsible for acidifying a variety of intracellular compartments in eukaryotic cells. The polypeptide is V-type proton ATPase subunit e1 (VHA-e1) (Arabidopsis thaliana (Mouse-ear cress)).